The primary structure comprises 104 residues: Met repressor (104 aa).

The protein belongs to the MetJ family. In terms of assembly, homodimer.

It localises to the cytoplasm. Functionally, this regulatory protein, when combined with SAM (S-adenosylmethionine) represses the expression of the methionine regulon and of enzymes involved in SAM synthesis. In Shewanella oneidensis (strain ATCC 700550 / JCM 31522 / CIP 106686 / LMG 19005 / NCIMB 14063 / MR-1), this protein is Met repressor.